Here is a 224-residue protein sequence, read N- to C-terminus: Transcription cofactor HES-6 (224 aa).

The tract at residues 1–31 (MAPPAAPGRDRVGREDEDGWETRGDRKARKP) is disordered. Residues 8 to 25 (GRDRVGREDEDGWETRGD) are compositionally biased toward basic and acidic residues. The 53-residue stretch at 25-77 (DRKARKPLVEKKRRARINESLQELRLLLAGAEVQAKLENAEVLELTVRRVQGV) folds into the bHLH domain. One can recognise an Orange domain in the interval 96-129 (FAAGYIQCMHEVHTFVSTCQAIDATVAAELLNHL). The span at 147–161 (DALAGPPRAPGRSGW) shows a compositional bias: low complexity. Residues 147-205 (DALAGPPRAPGRSGWPAGGAPGSPIPSPPGPGDDLCSDLEEAPEAELSQAPAEGPDLVP) are disordered. The span at 181-190 (LCSDLEEAPE) shows a compositional bias: acidic residues. A WRPW motif motif is present at residues 221-224 (WRPW).

As to quaternary structure, transcription repression requires formation of a complex with a corepressor protein of the Groucho/TLE family. Interacts with HES1.

The protein resides in the nucleus. Its function is as follows. Does not bind DNA itself but suppresses both HES1-mediated N box-dependent transcriptional repression and binding of HES1 to E box sequences. Also suppresses HES1-mediated inhibition of the heterodimer formed by ASCL1/MASH1 and TCF3/E47, allowing ASCL1 and TCF3 to up-regulate transcription in its presence. Promotes cell differentiation. The protein is Transcription cofactor HES-6 of Homo sapiens (Human).